The following is a 462-amino-acid chain: tRNA modification GTPase MnmE (462 aa).

R23, E86, and K125 together coordinate (6S)-5-formyl-5,6,7,8-tetrahydrofolate. The region spanning 221–384 (GIPVAIVGEP…LKNQLLSFVN (164 aa)) is the TrmE-type G domain. N231 contacts K(+). GTP contacts are provided by residues 231-236 (NVGKST), 250-256 (SEIAGTT), and 275-278 (DTAG). A Mg(2+)-binding site is contributed by S235. 3 residues coordinate K(+): S250, I252, and T255. A Mg(2+)-binding site is contributed by T256. K462 lines the (6S)-5-formyl-5,6,7,8-tetrahydrofolate pocket.

The protein belongs to the TRAFAC class TrmE-Era-EngA-EngB-Septin-like GTPase superfamily. TrmE GTPase family. As to quaternary structure, homodimer. Heterotetramer of two MnmE and two MnmG subunits. It depends on K(+) as a cofactor.

It localises to the cytoplasm. In terms of biological role, exhibits a very high intrinsic GTPase hydrolysis rate. Involved in the addition of a carboxymethylaminomethyl (cmnm) group at the wobble position (U34) of certain tRNAs, forming tRNA-cmnm(5)s(2)U34. This is tRNA modification GTPase MnmE from Flavobacterium psychrophilum (strain ATCC 49511 / DSM 21280 / CIP 103535 / JIP02/86).